Here is a 379-residue protein sequence, read N- to C-terminus: Alcohol dehydrogenase class-P (379 aa).

Ser2 is modified (N-acetylserine). A Zn(2+)-binding site is contributed by Cys47. Thr49 contributes to the an alcohol binding site. Thr49 is a binding site for NAD(+). Zn(2+) is bound by residues Asp50, His69, Glu70, Cys99, Cys102, Cys105, Cys113, and Cys177. Residue His69 coordinates an alcohol. Positions 206 and 226 each coordinate NAD(+). Ser229 bears the Phosphoserine mark. Positions 231, 272, 295, 297, 320, 322, and 372 each coordinate NAD(+).

It belongs to the zinc-containing alcohol dehydrogenase family. Class-P subfamily. Homodimer. The cofactor is Zn(2+). Glutathionylated. As to expression, root specific. Also detected in etiolated seedlings and leaves in cold conditions.

It is found in the cytoplasm. It catalyses the reaction a primary alcohol + NAD(+) = an aldehyde + NADH + H(+). It carries out the reaction a secondary alcohol + NAD(+) = a ketone + NADH + H(+). The enzyme catalyses ethanol + NAD(+) = acetaldehyde + NADH + H(+). Alcohol dehydrogenase activity show inverse correlation with the decreasing availability of oxygen. Slightly repressed by thiol-modifying agents N-ethylmaleimide (NEM) and 5,5-dithio-bis-(2-nitrobenzoic acid) (DTNB), as well as by methyl methanethiosulfonate (MMTS) in a dose-dependent manner. Inhibited by hydrogen peroxide H(2)O(2). Its function is as follows. Alcohol dehydrogenase catalyzing the reduction of toxic aldehydes to the corresponding alcohols. Mostly active on ethanol (EtOH), but exhibits broad substrate selectivity for primary and secondary alcohols (e.g. cinnamyl alcohol, octanol, geraniol, butanol, propyl alcohol, pentanol, isopentanol, ethylene glycol, isopropanol, methanol and tertiary butyl alcohol). Also catalyzes the reverse reaction to convert allyl alcohol to highly toxic acryl-aldehyde. Required for survival and acclimation in hypoxic conditions, especially in roots. Not able to catalyze NADH-dependent degradation of S-nitrosoglutathione (GSNO). The polypeptide is Alcohol dehydrogenase class-P (Arabidopsis thaliana (Mouse-ear cress)).